The primary structure comprises 382 residues: Saccharopine dehydrogenase [NAD(+), L-lysine-forming] (382 aa).

L-saccharopine is bound by residues arginine 20 and lysine 79. Residue lysine 79 is the Proton acceptor of the active site. Residue histidine 98 is the Proton donor of the active site. Glutamine 103 provides a ligand contact to L-saccharopine. Residue arginine 132 participates in NAD(+) binding. Residues arginine 133 and phenylalanine 137 each coordinate L-saccharopine. NAD(+) contacts are provided by residues 215–216 (GR), aspartate 239, threonine 243, tyrosine 263, and valine 290. The cysteines at positions 217 and 261 are disulfide-linked. 291 to 293 (SAD) is a binding site for L-saccharopine. 330–333 (IDHL) lines the NAD(+) pocket.

This sequence belongs to the AlaDH/PNT family. Monomer.

It carries out the reaction L-saccharopine + NAD(+) + H2O = L-lysine + 2-oxoglutarate + NADH + H(+). The protein operates within amino-acid biosynthesis; L-lysine biosynthesis via AAA pathway; L-lysine from L-alpha-aminoadipate (fungal route): step 3/3. In terms of biological role, catalyzes the NAD(+)-dependent cleavage of saccharopine to L-lysine and 2-oxoglutarate, the final step in the alpha-aminoadipate (AAA) pathway for lysin biosynthesis. This chain is Saccharopine dehydrogenase [NAD(+), L-lysine-forming], found in Candida albicans (strain SC5314 / ATCC MYA-2876) (Yeast).